The primary structure comprises 66 residues: Large ribosomal subunit protein bL33c (66 aa).

Belongs to the bacterial ribosomal protein bL33 family.

It is found in the plastid. Its subcellular location is the chloroplast. The protein is Large ribosomal subunit protein bL33c of Illicium oligandrum (Star anise).